The primary structure comprises 133 residues: Small ribosomal subunit protein uS19 (133 aa).

This sequence belongs to the universal ribosomal protein uS19 family.

Its function is as follows. Protein S19 forms a complex with S13 that binds strongly to the 16S ribosomal RNA. This chain is Small ribosomal subunit protein uS19 (rps19), found in Archaeoglobus fulgidus (strain ATCC 49558 / DSM 4304 / JCM 9628 / NBRC 100126 / VC-16).